A 371-amino-acid chain; its full sequence is Alanine racemase (371 aa).

Lysine 39 serves as the catalytic Proton acceptor; specific for D-alanine. Lysine 39 carries the post-translational modification N6-(pyridoxal phosphate)lysine. Position 137 (arginine 137) interacts with substrate. The active-site Proton acceptor; specific for L-alanine is tyrosine 266. Residue methionine 314 participates in substrate binding.

It belongs to the alanine racemase family. The cofactor is pyridoxal 5'-phosphate.

It carries out the reaction L-alanine = D-alanine. It functions in the pathway amino-acid biosynthesis; D-alanine biosynthesis; D-alanine from L-alanine: step 1/1. Its function is as follows. Catalyzes the interconversion of L-alanine and D-alanine. May also act on other amino acids. This chain is Alanine racemase (alr), found in Desulfovibrio desulfuricans (strain ATCC 27774 / DSM 6949 / MB).